A 155-amino-acid chain; its full sequence is Deoxyuridine 5'-triphosphate nucleotidohydrolase (155 aa).

Substrate is bound by residues 74 to 76 (RSG), N87, and 91 to 93 (LID).

Belongs to the dUTPase family. It depends on Mg(2+) as a cofactor.

It catalyses the reaction dUTP + H2O = dUMP + diphosphate + H(+). Its pathway is pyrimidine metabolism; dUMP biosynthesis; dUMP from dCTP (dUTP route): step 2/2. This enzyme is involved in nucleotide metabolism: it produces dUMP, the immediate precursor of thymidine nucleotides and it decreases the intracellular concentration of dUTP so that uracil cannot be incorporated into DNA. The chain is Deoxyuridine 5'-triphosphate nucleotidohydrolase from Xanthomonas oryzae pv. oryzae (strain PXO99A).